The following is a 401-amino-acid chain: NADH-quinone oxidoreductase subunit D (401 aa).

This sequence belongs to the complex I 49 kDa subunit family. As to quaternary structure, NDH-1 is composed of 15 different subunits. Subunits NuoB, C, D, E, F, and G constitute the peripheral sector of the complex.

Its subcellular location is the cell membrane. It catalyses the reaction a quinone + NADH + 5 H(+)(in) = a quinol + NAD(+) + 4 H(+)(out). Functionally, NDH-1 shuttles electrons from NADH, via FMN and iron-sulfur (Fe-S) centers, to quinones in the respiratory chain. The immediate electron acceptor for the enzyme in this species is believed to be a menaquinone. Couples the redox reaction to proton translocation (for every two electrons transferred, four hydrogen ions are translocated across the cytoplasmic membrane), and thus conserves the redox energy in a proton gradient. The chain is NADH-quinone oxidoreductase subunit D from Deinococcus radiodurans (strain ATCC 13939 / DSM 20539 / JCM 16871 / CCUG 27074 / LMG 4051 / NBRC 15346 / NCIMB 9279 / VKM B-1422 / R1).